A 522-amino-acid chain; its full sequence is Nitrogen fixation protein VnfA (522 aa).

Positions 22 to 183 (LLYEMSQIAT…AQAVELYLVE (162 aa)) are a domain. Positions 35–177 (DLSSIISILL…ILATTTAQAV (143 aa)) constitute a GAF domain. Positions 210–439 (IIGNSKPMLE…LENVIERAML (230 aa)) constitute a Sigma-54 factor interaction domain. Residues 238–245 (GESGVGKE) and 301–310 (AAGGTIFLDE) each bind ATP. The segment at residues 493 to 512 (MTEAATHLGLTARVLGLRMG) is a DNA-binding region (H-T-H motif).

Its function is as follows. Required for the expression of the V-dependent nitrogen fixation system in Azotobacter vinelandii. It is required for the regulation of nitrogenase 2 transcription. Interacts with sigma-54. This is Nitrogen fixation protein VnfA (vnfA) from Azotobacter vinelandii.